Reading from the N-terminus, the 472-residue chain is Zinc finger imprinted 3 (472 aa).

In terms of domain architecture, KRAB spans 8–80 (VTFEDVTVNF…EEEVLGSGRA (73 aa)). 11 consecutive C2H2-type zinc fingers follow at residues 167 to 189 (LKCN…LRRH), 195 to 217 (FECH…QKTH), 223 to 245 (YKCE…QKMH), 251 to 273 (YQCK…EKIH), 279 to 301 (YQCN…KKVH), 307 to 329 (FQCT…QRIH), 335 to 357 (YKCS…EKIH), 363 to 385 (YECD…KKIH), 391 to 413 (YECN…QKTH), 419 to 441 (YRCS…KKTH), and 447 to 470 (YGCS…KRIH).

The protein belongs to the krueppel C2H2-type zinc-finger protein family.

It localises to the nucleus. In terms of biological role, may be involved in transcriptional regulation. The protein is Zinc finger imprinted 3 (ZIM3) of Homo sapiens (Human).